Consider the following 155-residue polypeptide: MSTIVIDYQTESIPDDWLYPAEWRIQRWLDCALTVLAIDEALEVTIRLVDNDEITELNAEYRGKNAPTNVLSFPCDWDLPEEPRLLGDIVIAVQIVNQEAKAQKKKMEQHWAHMTIHGLLHLLDYDHIEEKEAQIMEDLERTILAQLGFPDPYCA.

Residues His117, His121, and His127 each contribute to the Zn(2+) site.

The protein belongs to the endoribonuclease YbeY family. The cofactor is Zn(2+).

It localises to the cytoplasm. Functionally, single strand-specific metallo-endoribonuclease involved in late-stage 70S ribosome quality control and in maturation of the 3' terminus of the 16S rRNA. This chain is Endoribonuclease YbeY, found in Dichelobacter nodosus (strain VCS1703A).